Reading from the N-terminus, the 275-residue chain is tRNA (guanine-N(7)-)-methyltransferase (275 aa).

The disordered stretch occupies residues 1–73 (MRHHGRMHAR…GGQQDTWERL (73 aa)). The segment covering 46–59 (AHRHRRVTSFRSRR) has biased composition (basic residues). S-adenosyl-L-methionine-binding residues include E107, E132, D159, and D182. D182 is a catalytic residue. Residues K186, D218, and 254–257 (TKYE) each bind substrate.

It belongs to the class I-like SAM-binding methyltransferase superfamily. TrmB family.

It catalyses the reaction guanosine(46) in tRNA + S-adenosyl-L-methionine = N(7)-methylguanosine(46) in tRNA + S-adenosyl-L-homocysteine. The protein operates within tRNA modification; N(7)-methylguanine-tRNA biosynthesis. Functionally, catalyzes the formation of N(7)-methylguanine at position 46 (m7G46) in tRNA. The protein is tRNA (guanine-N(7)-)-methyltransferase of Mycobacterium sp. (strain KMS).